The following is a 298-amino-acid chain: Ribosomal RNA small subunit methyltransferase H (298 aa).

S-adenosyl-L-methionine contacts are provided by residues 37–39 (GGH), Asp57, Leu91, Asp105, and Gln112.

This sequence belongs to the methyltransferase superfamily. RsmH family.

It localises to the cytoplasm. It catalyses the reaction cytidine(1402) in 16S rRNA + S-adenosyl-L-methionine = N(4)-methylcytidine(1402) in 16S rRNA + S-adenosyl-L-homocysteine + H(+). Functionally, specifically methylates the N4 position of cytidine in position 1402 (C1402) of 16S rRNA. The chain is Ribosomal RNA small subunit methyltransferase H from Kosmotoga olearia (strain ATCC BAA-1733 / DSM 21960 / TBF 19.5.1).